Consider the following 77-residue polypeptide: Conotoxin King-Kong 1 (77 aa).

Positions 1–22 (MKLTCMMIVAVLFLTAWTFATA) are cleaved as a signal peptide. Positions 23–49 (DDSSNGLENLFSKAHHEMKNPEASKLN) are excised as a propeptide. Cystine bridges form between C52–C67, C59–C71, and C66–C76. At M61 the chain carries Methionine sulfoxide; partial.

Belongs to the conotoxin O1 superfamily. Expressed by the venom duct.

It localises to the secreted. The protein is Conotoxin King-Kong 1 of Conus textile (Cloth-of-gold cone).